Consider the following 156-residue polypeptide: Arginine repressor (156 aa).

The protein belongs to the ArgR family.

It localises to the cytoplasm. Its pathway is amino-acid biosynthesis; L-arginine biosynthesis [regulation]. In terms of biological role, regulates arginine biosynthesis genes. This chain is Arginine repressor, found in Enterobacter sp. (strain 638).